The sequence spans 267 residues: 14-3-3-like protein GF14 phi (267 aa).

Residue Ala2 is modified to N-acetylalanine. Ser73 and Ser196 each carry phosphoserine. At Thr217 the chain carries Phosphothreonine. Residues Met244–Ile267 are disordered. The residue at position 248 (Ser248) is a Phosphoserine. A compositionally biased stretch (basic and acidic residues) spans Glu250–Ile267.

This sequence belongs to the 14-3-3 family. As to quaternary structure, interacts with FD. Interacts with CINV1.

Its subcellular location is the nucleus. It localises to the cytoplasm. In terms of biological role, is associated with a DNA binding complex that binds to the G box, a well-characterized cis-acting DNA regulatory element found in plant genes. This is 14-3-3-like protein GF14 phi (GRF4) from Arabidopsis thaliana (Mouse-ear cress).